The sequence spans 722 residues: Transmembrane channel-like protein 8 (722 aa).

Residues 1–21 form a disordered region; the sequence is MFRQWSVQSGPAPRRPESQAA. Residues 1 to 118 lie on the Cytoplasmic side of the membrane; the sequence is MFRQWSVQSG…GIQSYFTFLR (118 aa). 2 positions are modified to phosphoserine: Ser6 and Ser18. Residues 119–139 traverse the membrane as a helical segment; it reads FLLLLNLLTMLLTACFVLLPL. The Lumenal portion of the chain corresponds to 140 to 204; the sequence is VWLRPPELGP…AGPESSSEYS (65 aa). Asn184 is a glycosylation site (N-linked (GlcNAc...) asparagine). The chain crosses the membrane as a helical span at residues 205–225; the sequence is IRLAYLLSPMVCLLLCFCGIL. At 226–307 the chain is on the cytoplasmic side; it reads QRMAEGLPQQ…CRLLTYLRTN (82 aa). Residues 308-328 form a helical membrane-spanning segment; sequence ILIVLLVVGAISAIFWATKYS. Residues 329 to 375 are Lumenal-facing; the sequence is QDNKEESLFLVLQYLPPGVISLVNFLGPQLFTVLIQLENYPPGTEVN. A TMC domain region spans residues 366 to 534; sequence ENYPPGTEVN…SPRRFRASSS (169 aa). An N-linked (GlcNAc...) asparagine glycan is attached at Asn375. A helical membrane pass occupies residues 376-396; it reads LTLIWCVVLKLASLGMFSFSL. Topologically, residues 397–430 are cytoplasmic; sequence GQTVLCIGRNKTSCESYGYNACDYQCWENSVGEE. A helical transmembrane segment spans residues 431–451; it reads LYKLIIFNFLLTVAFAFLVSL. The Lumenal portion of the chain corresponds to 452 to 492; it reads PRRLLVERFSGWFWTWLDREEFLVPKNVLDIVAAQTVTWMG. Residues 493–513 traverse the membrane as a helical segment; that stretch reads LFYCPLLPLLNSVFLFLTFYI. Over 514-536 the chain is Cytoplasmic; sequence KKYTLLRNSRASPRRFRASSSTF. Residues 537–557 traverse the membrane as a helical segment; sequence FFHLVLLLGLLLAAVPLAYVI. The Lumenal portion of the chain corresponds to 558–598; that stretch reads SSTHSSWDCGLFTNYSAPWQVVPELVALQLPLPSQRALRYL. Asn571 carries an N-linked (GlcNAc...) asparagine glycan. A helical transmembrane segment spans residues 599–619; sequence SSHAFSFPLLILLSIVLTVCI. Topologically, residues 620-722 are cytoplasmic; that stretch reads SQSRANARAI…RFHFPSRTEL (103 aa). Phosphoserine is present on residues Ser658, Ser663, and Ser673. Positions 658–722 are disordered; sequence SPEPGSPHSR…RFHFPSRTEL (65 aa). Pro residues predominate over residues 678-687; the sequence is FPCPGSPGPR. A compositionally biased stretch (low complexity) spans 689–712; sequence PRLAPSNRLSSSSLGAPSASVPAS. A Phosphoserine modification is found at Ser698.

It belongs to the TMC family. Interacts with TMC6. Interacts and forms a complex with TMC6 and CIB1; the interaction stabilizes each component of the complex. Interacts and forms a complex with TMC6 and SLC30A1/ZNT1; the interaction regulates zinc transport into the ER. Interacts with TRADD; the interaction competes with TRADD/RIPK1/TRAF2/cIAPs complex I formation and facilites complex II formation. As to expression, expressed in thymus, lung, prostate, placenta, testis and spleen. Expressed in lymphocytes and peripheral lymphocytes.

The protein localises to the endoplasmic reticulum membrane. Its subcellular location is the golgi apparatus membrane. The protein resides in the nucleus membrane. Acts as a regulatory protein involved in the regulation of numerous cellular processes. Together with its homolog TMC6/EVER1, forms a complex with calcium-binding protein CIB1 in lymphocytes and keratynocytes where TMC6 and TMC8 stabilize CIB1 levels and reciprocally. Together with TMC6, also forms a complex with and activates zinc transporter ZNT1 at the ER membrane of keratynocytes, thereby facilitating zinc uptake into the ER. Also inhibits receptor-mediated calcium release from ER stores and calcium activated and volume regulated chloride channels. Down-regulates the activity of transcription factors induced by zinc and cytokines. Also sequesters TRADD which impairs the recruitment of TRAF2 and RIPK1 in the pro-survival complex I and promotes proapoptotic complex II formation, and may therefore be involved in TNF-induced cell death/survival decisions. In Mus musculus (Mouse), this protein is Transmembrane channel-like protein 8.